A 953-amino-acid polypeptide reads, in one-letter code: Translation initiation factor IF-2 (953 aa).

Residues 53–368 form a disordered region; that stretch reads AKKAVAGTSE…PVTERKFHEL (316 aa). Composition is skewed to basic and acidic residues over residues 135-151 and 162-190; these read FKAE…ERRK and RNDR…RNRQ. The span at 191–214 shows a compositional bias: low complexity; the sequence is EQGNQHRNQGQSQYNQQRQSFNQG. A compositionally biased stretch (basic and acidic residues) spans 236–266; it reads RSSEERFKQAKANKEALREQNKRKEQAKLED. Over residues 274-288 the composition is skewed to low complexity; it reads PKPTAKAPATPAPTA. Residues 301 to 318 show a composition bias toward basic and acidic residues; it reads ARPDKERDNFDHEEDGPR. Positions 332 to 341 are enriched in low complexity; it reads NQKNSNWNNN. Residues 455–622 form the tr-type G domain; sequence ERPPVVTIMG…TVLLVAEIQE (168 aa). The segment at 464–471 is G1; the sequence is GHVDHGKT. Position 464–471 (464–471) interacts with GTP; it reads GHVDHGKT. The G2 stretch occupies residues 489–493; it reads GITQH. Residues 510–513 are G3; that stretch reads DTPG. Residues 510-514 and 564-567 each bind GTP; these read DTPGH and NKID. The segment at 564–567 is G4; it reads NKID. The segment at 600–602 is G5; sequence SAK.

Belongs to the TRAFAC class translation factor GTPase superfamily. Classic translation factor GTPase family. IF-2 subfamily.

It is found in the cytoplasm. In terms of biological role, one of the essential components for the initiation of protein synthesis. Protects formylmethionyl-tRNA from spontaneous hydrolysis and promotes its binding to the 30S ribosomal subunits. Also involved in the hydrolysis of GTP during the formation of the 70S ribosomal complex. In Streptococcus gordonii (strain Challis / ATCC 35105 / BCRC 15272 / CH1 / DL1 / V288), this protein is Translation initiation factor IF-2.